Here is a 181-residue protein sequence, read N- to C-terminus: Large ribosomal subunit protein bL17 (181 aa).

The segment at 129–181 (AEKSEKSAKTAKAAKAPAKKATAKKASTKAVAAKKKAVKKAQKKDRAASAARA) is disordered. The span at 145–171 (PAKKATAKKASTKAVAAKKKAVKKAQK) shows a compositional bias: basic residues.

It belongs to the bacterial ribosomal protein bL17 family. As to quaternary structure, part of the 50S ribosomal subunit. Contacts protein L32.

This Bdellovibrio bacteriovorus (strain ATCC 15356 / DSM 50701 / NCIMB 9529 / HD100) protein is Large ribosomal subunit protein bL17.